We begin with the raw amino-acid sequence, 130 residues long: Large ribosomal subunit protein bL20 (130 aa).

It belongs to the bacterial ribosomal protein bL20 family.

Functionally, binds directly to 23S ribosomal RNA and is necessary for the in vitro assembly process of the 50S ribosomal subunit. It is not involved in the protein synthesizing functions of that subunit. This is Large ribosomal subunit protein bL20 from Nocardioides sp. (strain ATCC BAA-499 / JS614).